The primary structure comprises 124 residues: Histone H2A (124 aa).

The span at Met-1–Ser-18 shows a compositional bias: basic residues. Residues Met-1–Leu-23 form a disordered region. Ser-2 is modified (N-acetylserine). Ser-2 carries the phosphoserine modification. Position 104 is an N5-methylglutamine (Gln-104).

Belongs to the histone H2A family. As to quaternary structure, the nucleosome is a histone octamer containing two molecules each of H2A, H2B, H3 and H4 assembled in one H3-H4 heterotetramer and two H2A-H2B heterodimers. The octamer wraps approximately 147 bp of DNA. Post-translationally, phosphorylation of Ser-2 directly represses transcription.

The protein resides in the nucleus. It localises to the chromosome. In terms of biological role, core component of nucleosome. Nucleosomes wrap and compact DNA into chromatin, limiting DNA accessibility to the cellular machineries which require DNA as a template. Histones thereby play a central role in transcription regulation, DNA repair, DNA replication and chromosomal stability. DNA accessibility is regulated via a complex set of post-translational modifications of histones, also called histone code, and nucleosome remodeling. The polypeptide is Histone H2A (Platynereis dumerilii (Dumeril's clam worm)).